Reading from the N-terminus, the 291-residue chain is Neugrin (291 aa).

Residues 1–15 (MAVTLSLLLSGRVCA) form the signal peptide. Residues 27–49 (VADPGPIGREPDPDSDWEPEERE) form a disordered region. Acidic residues predominate over residues 39–49 (PDSDWEPEERE). The residue at position 41 (Ser-41) is a Phosphoserine. Asn-158 carries N-linked (GlcNAc...) asparagine glycosylation. Residues 224–270 (VAAPLGHPRELQKYSSDSESPRRTGNGALPSDQKLEELKAEEPGNFS) form a disordered region. The span at 256 to 265 (QKLEELKAEE) shows a compositional bias: basic and acidic residues.

This sequence belongs to the neugrin family. As to quaternary structure, forms a regulatory protein-RNA complex, consisting of RCC1L, NGRN, RPUSD3, RPUSD4, TRUB2, FASTKD2 and 16S mt-rRNA. Interacts with 16S mt-rRNA; this interaction is direct.

It is found in the nucleus. The protein localises to the secreted. It localises to the mitochondrion membrane. Functionally, plays an essential role in mitochondrial ribosome biogenesis. As a component of a functional protein-RNA module, consisting of RCC1L, NGRN, RPUSD3, RPUSD4, TRUB2, FASTKD2 and 16S mitochondrial ribosomal RNA (16S mt-rRNA), controls 16S mt-rRNA abundance and is required for intra-mitochondrial translation of core subunits of the oxidative phosphorylation system. The chain is Neugrin (NGRN) from Pongo abelii (Sumatran orangutan).